A 177-amino-acid chain; its full sequence is Large ribosomal subunit protein bL9 (177 aa).

This sequence belongs to the bacterial ribosomal protein bL9 family.

Functionally, binds to the 23S rRNA. In Rhodopirellula baltica (strain DSM 10527 / NCIMB 13988 / SH1), this protein is Large ribosomal subunit protein bL9.